The following is an 840-amino-acid chain: Heat shock 70 kDa protein 4 (840 aa).

Residue Lys53 is modified to N6-acetyllysine. Ser76 bears the Phosphoserine mark. 2 positions are modified to phosphotyrosine: Tyr89 and Tyr336. Ser393 and Ser415 each carry phosphoserine. At Lys430 the chain carries N6-acetyllysine. Residues 506–575 (NEEPMETDQN…QAKKAKVKTS (70 aa)) are disordered. The segment covering 514-533 (QNAKEEEKMQVDQEEPHAEE) has biased composition (basic and acidic residues). The residue at position 538 (Thr538) is a Phosphothreonine. Ser546 and Ser647 each carry phosphoserine. At Tyr660 the chain carries Phosphotyrosine. An N6-acetyllysine modification is found at Lys679. Ser756 carries the phosphoserine modification. Position 773 is an N6-methyllysine (Lys773). Residues 782-840 (IISKPKPKVEPPKEEQKNAEQNGPVDGQGDSPGPQAAEQGTDTAVPSDSDKKLPEMDID) are disordered. 2 stretches are compositionally biased toward basic and acidic residues: residues 788–799 (PKVEPPKEEQKN) and 829–840 (DSDKKLPEMDID).

This sequence belongs to the heat shock protein 70 family. As to quaternary structure, interacts with TJP1/ZO-1.

It localises to the cytoplasm. The chain is Heat shock 70 kDa protein 4 (HSPA4) from Canis lupus familiaris (Dog).